Consider the following 445-residue polypeptide: Mannan endo-1,4-beta-mannosidase 2 (445 aa).

The signal sequence occupies residues 1-27 (MAVGNGLILYHILGLASCIALVYFSLG). Position 110 (Trp-110) interacts with substrate. Asn-181 carries an N-linked (GlcNAc...) asparagine glycan. Asn-226 contributes to the substrate binding site. The active-site Proton donor is Glu-227. Residue Tyr-309 participates in substrate binding. Catalysis depends on Glu-349, which acts as the Nucleophile. Trp-391 contributes to the substrate binding site.

This sequence belongs to the glycosyl hydrolase 5 (cellulase A) family. Expressed in stems and seeds, and at lower levels in roots and leaves.

Its subcellular location is the secreted. The catalysed reaction is Random hydrolysis of (1-&gt;4)-beta-D-mannosidic linkages in mannans, galactomannans and glucomannans.. In Oryza sativa subsp. japonica (Rice), this protein is Mannan endo-1,4-beta-mannosidase 2 (MAN2).